We begin with the raw amino-acid sequence, 1191 residues long: Putative glycoside hydrolase 22789 (1191 aa).

The segment covering 173–187 has biased composition (low complexity); sequence PSSSGASSVLPSPSA. The segment at 173–221 is disordered; sequence PSSSGASSVLPSPSAHTPDAATDANHLPNPDPASGRQELTRAGRPARKK.

Belongs to the glycoside hydrolase-like 3 (GHL3) family.

This chain is Putative glycoside hydrolase 22789, found in Monosiga brevicollis (Choanoflagellate).